The chain runs to 538 residues: Mevalonate kinase erg12 (538 aa).

The disordered stretch occupies residues M1 to P87. The span at T9–S29 shows a compositional bias: polar residues. Over residues T57–T69 the composition is skewed to low complexity. ATP-binding positions include K99, S231, and G236–S242. Mg(2+) is bound by residues S242 and E287. D298 acts as the Proton acceptor in catalysis.

It belongs to the GHMP kinase family. Mevalonate kinase subfamily. Homodimer. It depends on Mg(2+) as a cofactor.

The protein resides in the cytoplasm. It is found in the cytosol. The catalysed reaction is (R)-mevalonate + ATP = (R)-5-phosphomevalonate + ADP + H(+). It participates in isoprenoid biosynthesis; isopentenyl diphosphate biosynthesis via mevalonate pathway; isopentenyl diphosphate from (R)-mevalonate: step 1/3. Its function is as follows. Mevalonate kinase; part of the second module of ergosterol biosynthesis pathway that includes the middle steps of the pathway. Erg12 converts mevalonate into 5-phosphomevalonate. The second module is carried out in the vacuole and involves the formation of farnesyl diphosphate, which is also an important intermediate in the biosynthesis of ubiquinone, dolichol, heme and prenylated proteins. Activity by the mevalonate kinase erg12 (AFUA_4G07780) first converts mevalonate into 5-phosphomevalonate. 5-phosphomevalonate is then further converted to 5-diphosphomevalonate by the phosphomevalonate kinase erg8 (AFUA_5G10680). The diphosphomevalonate decarboxylase mvd1 (AFUA_4G07130) then produces isopentenyl diphosphate. The isopentenyl-diphosphate delta-isomerase idi1 (AFUA_6G11160) then catalyzes the 1,3-allylic rearrangement of the homoallylic substrate isopentenyl (IPP) to its highly electrophilic allylic isomer, dimethylallyl diphosphate (DMAPP). Finally the farnesyl diphosphate synthase erg20 (AFUA_5G02450) catalyzes the sequential condensation of isopentenyl pyrophosphate with dimethylallyl pyrophosphate, and then with the resultant geranylpyrophosphate to the ultimate product farnesyl pyrophosphate. The polypeptide is Mevalonate kinase erg12 (Aspergillus fumigatus (strain ATCC MYA-4609 / CBS 101355 / FGSC A1100 / Af293) (Neosartorya fumigata)).